A 157-amino-acid polypeptide reads, in one-letter code: Transcriptional repressor NrdR (157 aa).

Residues 1–21 (MKCPHCGNNGSRVVDSRPTDE) form a disordered region. Residues 3-34 (CPHCGNNGSRVVDSRPTDEGRVIRRRRECEKC) fold into a zinc finger. Residues 49–139 (LLVIKKNGSR…VYRQFKDMHV (91 aa)) form the ATP-cone domain.

It belongs to the NrdR family. Zn(2+) serves as cofactor.

Its function is as follows. Negatively regulates transcription of bacterial ribonucleotide reductase nrd genes and operons by binding to NrdR-boxes. The sequence is that of Transcriptional repressor NrdR from Pediococcus pentosaceus (strain ATCC 25745 / CCUG 21536 / LMG 10740 / 183-1w).